We begin with the raw amino-acid sequence, 454 residues long: tRNA modification GTPase MnmE (454 aa).

Residues Arg23, Glu80, and Lys120 each contribute to the (6S)-5-formyl-5,6,7,8-tetrahydrofolate site. The 162-residue stretch at 216–377 (GMRVVIAGRP…VREHLKACIG (162 aa)) folds into the TrmE-type G domain. Asn226 provides a ligand contact to K(+). GTP-binding positions include 226 to 231 (NAGKSS), 245 to 251 (TEIAGTT), 270 to 273 (DTAG), and 335 to 338 (NKAD). Ser230 is a Mg(2+) binding site. K(+)-binding residues include Thr245, Ile247, and Thr250. Thr251 serves as a coordination point for Mg(2+). Residue Lys454 coordinates (6S)-5-formyl-5,6,7,8-tetrahydrofolate.

It belongs to the TRAFAC class TrmE-Era-EngA-EngB-Septin-like GTPase superfamily. TrmE GTPase family. In terms of assembly, homodimer. Heterotetramer of two MnmE and two MnmG subunits. Requires K(+) as cofactor.

It is found in the cytoplasm. Functionally, exhibits a very high intrinsic GTPase hydrolysis rate. Involved in the addition of a carboxymethylaminomethyl (cmnm) group at the wobble position (U34) of certain tRNAs, forming tRNA-cmnm(5)s(2)U34. This Pseudoalteromonas translucida (strain TAC 125) protein is tRNA modification GTPase MnmE.